A 169-amino-acid polypeptide reads, in one-letter code: NAD(P)H-quinone oxidoreductase subunit J, chloroplastic (169 aa).

This sequence belongs to the complex I 30 kDa subunit family. NDH is composed of at least 16 different subunits, 5 of which are encoded in the nucleus.

Its subcellular location is the plastid. It localises to the chloroplast thylakoid membrane. The catalysed reaction is a plastoquinone + NADH + (n+1) H(+)(in) = a plastoquinol + NAD(+) + n H(+)(out). It carries out the reaction a plastoquinone + NADPH + (n+1) H(+)(in) = a plastoquinol + NADP(+) + n H(+)(out). Its function is as follows. NDH shuttles electrons from NAD(P)H:plastoquinone, via FMN and iron-sulfur (Fe-S) centers, to quinones in the photosynthetic chain and possibly in a chloroplast respiratory chain. The immediate electron acceptor for the enzyme in this species is believed to be plastoquinone. Couples the redox reaction to proton translocation, and thus conserves the redox energy in a proton gradient. The sequence is that of NAD(P)H-quinone oxidoreductase subunit J, chloroplastic from Zygnema circumcarinatum (Green alga).